The chain runs to 104 residues: uncharacterized protein (104 aa).

Residues 42–104 are a coiled coil; it reads ARDSFDQDFE…AREERHKLGR (63 aa).

The protein belongs to the WXG100 family.

This is an uncharacterized protein from Bacillus subtilis (strain 168).